An 862-amino-acid chain; its full sequence is Protein JOKA2 (862 aa).

The region spanning 6–90 (SIVIKVKYEE…NPLRISARLN (85 aa)) is the PB1 domain. A compositionally biased stretch (low complexity) spans 92 to 106 (GERSGRASARSSGNS). Disordered stretches follow at residues 92–117 (GERS…VQPP), 194–234 (KGNT…ASNE), and 295–345 (VRNS…DSSG). Polar residues predominate over residues 325–345 (SASSSKVKQCNWDSPNADSSG). The segment at 442-492 (HKGVRCDGCGVHPITGPRFISKVKENYDLCSICFAEMGNDADYIRMDRPLT) adopts a ZZ-type; degenerate zinc-finger fold. Zn(2+) is bound by residues cysteine 447, cysteine 450, cysteine 471, and cysteine 474. The 50-residue stretch at 811-860 (SVDDLCGVAEWDPILEELKEMGFCDKEMNKKLLKKNNGSIKRVVMDLIAG) folds into the UBA domain. Positions 817-824 (GVAEWDPI) match the ATG8 interacting motif (AIM) motif.

As to quaternary structure, interacts (via C-terminal AIM motif) with ATG8CL.

The protein localises to the vacuole. It localises to the cytoplasmic vesicle. The protein resides in the autophagosome. In terms of biological role, autophagic substrate that functions as a host autophagy cargo receptor. Requires ATG8 protein expression to be recognized as an autophagic substrate. Activates ATG8CL-mediated selective autophagy, and contributes to defense against the fungal pathogen Phytophtora infestans. The protein is Protein JOKA2 of Solanum tuberosum (Potato).